A 647-amino-acid polypeptide reads, in one-letter code: Exoribonuclease 2 (647 aa).

The RNB domain occupies 192–520 (REDLTALSFV…NHRLLKAIIS (329 aa)). In terms of domain architecture, S1 motif spans 565–647 (ESTFNAEIID…ETRNIVARPI (83 aa)).

This sequence belongs to the RNR ribonuclease family. RNase II subfamily.

It is found in the cytoplasm. It catalyses the reaction Exonucleolytic cleavage in the 3'- to 5'-direction to yield nucleoside 5'-phosphates.. Functionally, involved in mRNA degradation. Hydrolyzes single-stranded polyribonucleotides processively in the 3' to 5' direction. This chain is Exoribonuclease 2, found in Proteus mirabilis (strain HI4320).